A 357-amino-acid polypeptide reads, in one-letter code: Nicotinate-nucleotide--dimethylbenzimidazole phosphoribosyltransferase (357 aa).

The active-site Proton acceptor is the Glu323.

It belongs to the CobT family.

The catalysed reaction is 5,6-dimethylbenzimidazole + nicotinate beta-D-ribonucleotide = alpha-ribazole 5'-phosphate + nicotinate + H(+). Its pathway is nucleoside biosynthesis; alpha-ribazole biosynthesis; alpha-ribazole from 5,6-dimethylbenzimidazole: step 1/2. In terms of biological role, catalyzes the synthesis of alpha-ribazole-5'-phosphate from nicotinate mononucleotide (NAMN) and 5,6-dimethylbenzimidazole (DMB). In Nitratidesulfovibrio vulgaris (strain DP4) (Desulfovibrio vulgaris), this protein is Nicotinate-nucleotide--dimethylbenzimidazole phosphoribosyltransferase.